The following is a 652-amino-acid chain: RNA-binding E3 ubiquitin-protein ligase MEX3C (652 aa).

Disordered stretches follow at residues 15–39 (AAPA…ELEG) and 80–136 (QARR…EDRP). A compositionally biased stretch (pro residues) spans 18–33 (APLPQPPPLPPPPPAG). A compositionally biased stretch (acidic residues) spans 101-134 (AELELEVDEEEGEEAELDGELLEEEELEEAEEED). KH domains follow at residues 225–286 (TTEC…KREI) and 319–380 (QTTV…REEI). Disordered stretches follow at residues 429-448 (ARMM…SGST) and 506-566 (FEPV…HVGL). Positions 430–448 (RMMSNYRNDSSSSLGSGST) are enriched in low complexity. Residues 519–537 (PSGNMKTQRRGSQPSTPRL) are compositionally biased toward polar residues. 2 positions are modified to phosphoserine: Ser530 and Ser538. Residues 544 to 555 (SIEHPLARRVRS) are compositionally biased toward basic and acidic residues. An RING-type zinc finger spans residues 601-641 (CVICFENEVIAALVPCGHNLFCMECANKICEKRTPSCPVCQ).

As to quaternary structure, interacts with USP7, which antagonizes the ability to degrade mRNA. In terms of processing, phosphorylated.

Its subcellular location is the nucleus. The protein localises to the cytoplasm. The enzyme catalyses S-ubiquitinyl-[E2 ubiquitin-conjugating enzyme]-L-cysteine + [acceptor protein]-L-lysine = [E2 ubiquitin-conjugating enzyme]-L-cysteine + N(6)-ubiquitinyl-[acceptor protein]-L-lysine.. RNA-binding protein. May be involved in post-transcriptional regulatory mechanisms, modulating levels of some mRNAs by promoting their degradation in a way involving ubiquitin ligase activity. May act as suppressor of replication stress and chromosome missegregation. The protein is RNA-binding E3 ubiquitin-protein ligase MEX3C (Mex3c) of Mus musculus (Mouse).